The sequence spans 216 residues: Protein InaA (216 aa).

It belongs to the protein kinase superfamily. KdkA/RfaP family.

Functionally, may be an environmental sensor responsive to several stimuli, including internal pH, proton motive force, temperature, and possibly other unknown factors. This is Protein InaA (inaA) from Escherichia coli (strain K12).